We begin with the raw amino-acid sequence, 272 residues long: Hydroxyethylthiazole kinase (272 aa).

Met-45 contacts substrate. Positions 121 and 168 each coordinate ATP. Gly-195 contacts substrate.

It belongs to the Thz kinase family. Homotrimer. It depends on Mg(2+) as a cofactor.

The enzyme catalyses 5-(2-hydroxyethyl)-4-methylthiazole + ATP = 4-methyl-5-(2-phosphooxyethyl)-thiazole + ADP + H(+). It functions in the pathway cofactor biosynthesis; thiamine diphosphate biosynthesis; 4-methyl-5-(2-phosphoethyl)-thiazole from 5-(2-hydroxyethyl)-4-methylthiazole: step 1/1. Catalyzes the phosphorylation of the hydroxyl group of 4-methyl-5-beta-hydroxyethylthiazole (THZ). The protein is Hydroxyethylthiazole kinase of Bacillus subtilis (strain 168).